The chain runs to 264 residues: 3-methyl-2-oxobutanoate hydroxymethyltransferase (264 aa).

Asp45 and Asp84 together coordinate Mg(2+). 3-methyl-2-oxobutanoate is bound by residues 45–46 (DS), Asp84, and Lys112. Glu114 is a binding site for Mg(2+). The Proton acceptor role is filled by Glu181.

Belongs to the PanB family. Homodecamer; pentamer of dimers. Mg(2+) is required as a cofactor.

The protein resides in the cytoplasm. The enzyme catalyses 3-methyl-2-oxobutanoate + (6R)-5,10-methylene-5,6,7,8-tetrahydrofolate + H2O = 2-dehydropantoate + (6S)-5,6,7,8-tetrahydrofolate. It participates in cofactor biosynthesis; (R)-pantothenate biosynthesis; (R)-pantoate from 3-methyl-2-oxobutanoate: step 1/2. In terms of biological role, catalyzes the reversible reaction in which hydroxymethyl group from 5,10-methylenetetrahydrofolate is transferred onto alpha-ketoisovalerate to form ketopantoate. The chain is 3-methyl-2-oxobutanoate hydroxymethyltransferase from Shewanella sediminis (strain HAW-EB3).